The sequence spans 144 residues: Interleukin-3 (144 aa).

The N-terminal stretch at 1 to 17 is a signal peptide; that stretch reads MSSLSILHLLLLLLALH.

Belongs to the IL-3 family. In terms of assembly, monomer.

The protein localises to the secreted. Granulocyte/macrophage colony-stimulating factors are cytokines that act in hematopoiesis by controlling the production, differentiation, and function of 2 related white cell populations of the blood, the granulocytes and the monocytes-macrophages. Its function is as follows. This CSF induces granulocytes, macrophages, mast cells, stem cells, erythroid cells, eosinophils and megakaryocytes. The polypeptide is Interleukin-3 (IL3) (Bos taurus (Bovine)).